We begin with the raw amino-acid sequence, 1048 residues long: Protein argonaute 7 (1048 aa).

Residues 1–14 show a composition bias toward basic and acidic residues; sequence MEGEREGVVAKNED. Disordered regions lie at residues 1–50 and 121–141; these read MEGE…GSSG and KAADAAPRGSMWKHRPSKKPP. Residues 16-37 are compositionally biased toward gly residues; sequence AGGGGGGLGTGGNGGGGGGGSA. The span at 131 to 141 shows a compositional bias: basic residues; that stretch reads MWKHRPSKKPP. The PAZ domain maps to 422 to 530; it reads KRCDFLKDLP…VPMELCVVCE (109 aa). The Piwi domain maps to 709–1017; it reads LLICVMERRH…AAYRGRLYLE (309 aa).

This sequence belongs to the argonaute family. Ago subfamily. As to expression, expressed in the reproductive shoot apex.

In terms of biological role, involved in the RNA silencing pathway. May bind to short RNAs such as microRNAs (miRNAs) or short interfering RNAs (siRNAs), and represses the translation of mRNAs which are complementary to them. Regulates shoot apical meristem (SAM) initiation and maintenance and leaf polarization through the trans-acting siRNAS (ta-siRNAs) pathway which probably modulates the expression of the ARF2, ARF3, ARF4, ARF14 and ARF15 genes. The sequence is that of Protein argonaute 7 (AGO7) from Oryza sativa subsp. japonica (Rice).